The following is a 235-amino-acid chain: Keratin-associated protein 4-16 (235 aa).

A 16 X 5 AA repeats of C-C-[GIKRQVHEML]-[SPTRV]-[STVQRCP] region spans residues 1–132 (MCSSKMPCSP…CCCPCCCLRP (132 aa)). Tandem repeats lie at residues 23 to 27 (CCHPS), 28 to 32 (CCQTT), 33 to 37 (CCRTT), 48 to 52 (CCRPQ), 53 to 57 (CCHSV), 58 to 62 (CCQPT), 63 to 67 (CCRPS), 68 to 72 (CCQTT), 78 to 82 (CCHPS), 83 to 87 (CCVSS), 88 to 92 (CCRPQ), 93 to 97 (CCHSV), 103 to 107 (CCHPS), 108 to 112 (CCISS), 118 to 122 (CCESS), and 128 to 132 (CCLRP). Over residues 203–224 (SPSPSLPSLSPPLPSPPLPSPH) the composition is skewed to pro residues. The tract at residues 203–235 (SPSPSLPSLSPPLPSPPLPSPHFPSVNPKSMLQ) is disordered.

This sequence belongs to the KRTAP type 4 family. Interacts with hair keratins.

In the hair cortex, hair keratin intermediate filaments are embedded in an interfilamentous matrix, consisting of hair keratin-associated proteins (KRTAP), which are essential for the formation of a rigid and resistant hair shaft through their extensive disulfide bond cross-linking with abundant cysteine residues of hair keratins. The matrix proteins include the high-sulfur and high-glycine-tyrosine keratins. The sequence is that of Keratin-associated protein 4-16 from Homo sapiens (Human).